A 602-amino-acid chain; its full sequence is MILKLVHCLVALTGLIFAKPYQQQQAVLAPSQDVPLRDIHIGDINFIHTTDTHGWLGSHLSQNDYDADWGDFVAFVDILREKILRQSRDVIVIDTGDKRDGNGLSDATWPPGLRSSEIFNMMDYDLLTLGNHELYTAESAILEYRGTSQSSKFKDKYVCSNVEFIEDDGTRVPFGNKYITFETPIMKQRVLALSFLFSFQRANNRAIVTPPLEEITQKSWFQNMVETNREEEIDLIIVFGHLPATDPTEREMHKIHALIRKYYPNTVIQYFGGHTHIRDFVQLDSKSTCLQSGRFAETVGFLSINMTDPVDAESPIFSRRYIDFNKEAFKYHLSKLGHDSNVPVSTKKGKTISRLVNDLRHELNLNEKLGYIPQTYYVSTRPLNSEENLYHLITHKILPNLIPPKNYEPSMSRFILINTGSVRYDLYKGPFTKDTEYIVMPFNNDWRFITVPLVVASRVETYLNKGPVIASLGIPSSSHHKQHFGGFQKCPFINNPNLSEGYTTEDDFGCHGDDTPHNSQREYDIPNVVQCKEVKKVQEEEADPSKMVHVIFYSFMELDILNAVNSIINDLGLRMENLTTNDCSHYGGDSTKKLLRDYFSQF.

Asparagine 305, asparagine 497, and asparagine 577 each carry an N-linked (GlcNAc...) asparagine glycan.

Post-translationally, N-glycosylated.

The protein localises to the vacuole. This is an uncharacterized protein from Saccharomyces cerevisiae (strain ATCC 204508 / S288c) (Baker's yeast).